The following is a 177-amino-acid chain: R-phycoerythrin beta chain (177 aa).

Cys50 and Cys61 together coordinate phycourobilin. Asn72 is subject to N4-methylasparagine. (2R,3E)-phycoerythrobilin contacts are provided by Cys82 and Cys158.

It belongs to the phycobiliprotein family. As to quaternary structure, heterodimer of an alpha and a beta chain. Post-translationally, contains two covalently linked phycoerythrobilin chromophores and one covalently linked phycourobilin chromophore.

Its subcellular location is the plastid. The protein localises to the chloroplast thylakoid membrane. Light-harvesting photosynthetic bile pigment-protein from the phycobiliprotein complex. This chain is R-phycoerythrin beta chain (cpeB), found in Porphyra purpurea (Red seaweed).